A 483-amino-acid chain; its full sequence is Glycogen synthase kinase-3 alpha (483 aa).

Over residues 1-15 (MSGGGPSGGGPGGSG) the composition is skewed to gly residues. The disordered stretch occupies residues 1-96 (MSGGGPSGGG…PPPGVKLGRD (96 aa)). An N-acetylserine modification is found at Ser2. At Ser2 the chain carries Phosphoserine. Phosphoserine; by PKB/AKT1 is present on Ser21. Over residues 25–82 (PGGGGGGGGGGPGGSASGPGGTGGGKASVGAMGGGVGASSSGGGPGGSGGGGSGGPGA) the composition is skewed to gly residues. A phosphoserine mark is found at Ser72, Ser77, and Ser97. A Protein kinase domain is found at 119–403 (YTDIKVIGNG…PLEACAHSFF (285 aa)). Residues 125–133 (IGNGSFGVV) and Lys148 contribute to the ATP site. The active-site Proton acceptor is the Asp244. At Tyr279 the chain carries Phosphotyrosine. Residues 449-483 (AGTTTLTPSSQALTETPTSSDWQSTDATPTLTNSS) are disordered.

Belongs to the protein kinase superfamily. CMGC Ser/Thr protein kinase family. GSK-3 subfamily. As to quaternary structure, monomer. Interacts with ARRB2. Interacts with AXIN1 and CTNNB1/beta-catenin. Interacts with CTNND2. Interacts with LMBR1L. Interacts with DDX3X. Interacts with TNFRSF10B. Interacts with RICTOR; the interaction results in phosphorylation of RICTOR at 'Thr-1695' by GSK3A which facilitates FBXW7-mediated ubiquitination and subsequent degradation of RICTOR. (Microbial infection) Interacts with M.tuberculosis PtpA. Post-translationally, phosphorylated by AKT1 at Ser-21: upon insulin-mediated signaling, the activated PKB/AKT1 protein kinase phosphorylates and deactivates GSK3A, resulting in the dephosphorylation and activation of GYS1. Activated by phosphorylation at Tyr-279. (Microbial infection) Dephosphorylated at Tyr-279 by M.tuberculosis PtpA, which leads to prevention of apoptosis during early stages of microbial infection.

It catalyses the reaction L-seryl-[tau protein] + ATP = O-phospho-L-seryl-[tau protein] + ADP + H(+). The catalysed reaction is L-threonyl-[tau protein] + ATP = O-phospho-L-threonyl-[tau protein] + ADP + H(+). The enzyme catalyses L-seryl-[protein] + ATP = O-phospho-L-seryl-[protein] + ADP + H(+). It carries out the reaction L-threonyl-[protein] + ATP = O-phospho-L-threonyl-[protein] + ADP + H(+). With respect to regulation, activated by phosphorylation at Tyr-279. In response to insulin, inhibited by phosphorylation at Ser-21 by PKB/AKT1; phosphorylation at this site causes a conformational change, preventing access of substrates to the active site. Inhibited by lithium. Its function is as follows. Constitutively active protein kinase that acts as a negative regulator in the hormonal control of glucose homeostasis, Wnt signaling and regulation of transcription factors and microtubules, by phosphorylating and inactivating glycogen synthase (GYS1 or GYS2), CTNNB1/beta-catenin, APC and AXIN1. Requires primed phosphorylation of the majority of its substrates. Contributes to insulin regulation of glycogen synthesis by phosphorylating and inhibiting GYS1 activity and hence glycogen synthesis. Regulates glycogen metabolism in liver, but not in muscle. May also mediate the development of insulin resistance by regulating activation of transcription factors. In Wnt signaling, regulates the level and transcriptional activity of nuclear CTNNB1/beta-catenin. Facilitates amyloid precursor protein (APP) processing and the generation of APP-derived amyloid plaques found in Alzheimer disease. May be involved in the regulation of replication in pancreatic beta-cells. Is necessary for the establishment of neuronal polarity and axon outgrowth. Through phosphorylation of the anti-apoptotic protein MCL1, may control cell apoptosis in response to growth factors deprivation. Acts as a regulator of autophagy by mediating phosphorylation of KAT5/TIP60 under starvation conditions which activates KAT5/TIP60 acetyltransferase activity and promotes acetylation of key autophagy regulators, such as ULK1 and RUBCNL/Pacer. Negatively regulates extrinsic apoptotic signaling pathway via death domain receptors. Promotes the formation of an anti-apoptotic complex, made of DDX3X, BRIC2 and GSK3B, at death receptors, including TNFRSF10B. The anti-apoptotic function is most effective with weak apoptotic signals and can be overcome by stronger stimulation. Phosphorylates mTORC2 complex component RICTOR at 'Thr-1695' which facilitates FBXW7-mediated ubiquitination and subsequent degradation of RICTOR. The sequence is that of Glycogen synthase kinase-3 alpha (GSK3A) from Homo sapiens (Human).